A 118-amino-acid polypeptide reads, in one-letter code: Vesicle-associated membrane protein 1 (118 aa).

Over residues Met-1–Ala-15 the composition is skewed to low complexity. The disordered stretch occupies residues Met-1–Gln-36. Residues Met-1–Lys-96 lie on the Cytoplasmic side of the membrane. The region spanning Arg-33–Lys-93 is the v-SNARE coiled-coil homology domain. A Phosphoserine modification is found at Ser-63. A helical; Anchor for type IV membrane protein membrane pass occupies residues Met-97–Phe-116. Residues Phe-117–Thr-118 lie on the Vesicular side of the membrane.

The protein belongs to the synaptobrevin family. Interacts with VAPA and VAPB. In terms of processing, (Microbial infection) Targeted and hydrolyzed by C.botulinum neurotoxin type X (BoNT/X) which hydrolyzes the 68-Arg-|-Ala-69 bond and probably inhibits neurotransmitter release. It remains unknown whether BoNT/X is ever produced, or what organisms it targets. In terms of tissue distribution, highly expressed in the zona incerta and rostral periolivary region of the brain. Other neuroanatomical regions show negligible expression. Expressed in the retina, expression observed in the outer segments of the photoreceptors, in the outer and inner plexiform layers, and in a subset of ganglion cells.

Its subcellular location is the cytoplasmic vesicle. The protein localises to the secretory vesicle. The protein resides in the synaptic vesicle membrane. It localises to the synapse. It is found in the synaptosome. Its subcellular location is the cytoplasmic vesicle membrane. Its function is as follows. Involved in the targeting and/or fusion of transport vesicles to their target membrane. This Mus musculus (Mouse) protein is Vesicle-associated membrane protein 1 (Vamp1).